The sequence spans 157 residues: 2-C-methyl-D-erythritol 2,4-cyclodiphosphate synthase (157 aa).

A divalent metal cation contacts are provided by aspartate 8 and histidine 10. 4-CDP-2-C-methyl-D-erythritol 2-phosphate contacts are provided by residues aspartate 8–histidine 10 and histidine 34–serine 35. Histidine 42 is an a divalent metal cation binding site. Residues aspartate 56–glycine 58, phenylalanine 61–aspartate 65, alanine 100–alanine 106, threonine 132–glutamate 135, phenylalanine 139, and arginine 142 contribute to the 4-CDP-2-C-methyl-D-erythritol 2-phosphate site.

The protein belongs to the IspF family. In terms of assembly, homotrimer. A divalent metal cation serves as cofactor.

It catalyses the reaction 4-CDP-2-C-methyl-D-erythritol 2-phosphate = 2-C-methyl-D-erythritol 2,4-cyclic diphosphate + CMP. It participates in isoprenoid biosynthesis; isopentenyl diphosphate biosynthesis via DXP pathway; isopentenyl diphosphate from 1-deoxy-D-xylulose 5-phosphate: step 4/6. Functionally, involved in the biosynthesis of isopentenyl diphosphate (IPP) and dimethylallyl diphosphate (DMAPP), two major building blocks of isoprenoid compounds. Catalyzes the conversion of 4-diphosphocytidyl-2-C-methyl-D-erythritol 2-phosphate (CDP-ME2P) to 2-C-methyl-D-erythritol 2,4-cyclodiphosphate (ME-CPP) with a corresponding release of cytidine 5-monophosphate (CMP). The chain is 2-C-methyl-D-erythritol 2,4-cyclodiphosphate synthase from Pseudomonas fluorescens (strain ATCC BAA-477 / NRRL B-23932 / Pf-5).